The following is a 539-amino-acid chain: T-complex protein 1 subunit zeta (539 aa).

Belongs to the TCP-1 chaperonin family. As to quaternary structure, heterooligomeric complex of about 850 to 900 kDa that forms two stacked rings, 12 to 16 nm in diameter.

It localises to the cytoplasm. In terms of biological role, molecular chaperone; assists the folding of proteins upon ATP hydrolysis. Known to play a role, in vitro, in the folding of actin and tubulin. The sequence is that of T-complex protein 1 subunit zeta (cct6) from Dictyostelium discoideum (Social amoeba).